The primary structure comprises 541 residues: Arginine--tRNA ligase (541 aa).

Residues 119-129 carry the 'HIGH' region motif; sequence ANPTGPLHIGH.

The protein belongs to the class-I aminoacyl-tRNA synthetase family. As to quaternary structure, monomer.

Its subcellular location is the cytoplasm. It carries out the reaction tRNA(Arg) + L-arginine + ATP = L-arginyl-tRNA(Arg) + AMP + diphosphate. In Helicobacter pylori (strain J99 / ATCC 700824) (Campylobacter pylori J99), this protein is Arginine--tRNA ligase (argS).